We begin with the raw amino-acid sequence, 212 residues long: Pyridoxine/pyridoxamine 5'-phosphate oxidase (212 aa).

FMN is bound by residues Arg-61–Lys-66, Tyr-76–Thr-77, Lys-83, and Gln-105. Lys-66 serves as a coordination point for substrate. Residues Tyr-123, Arg-127, and Ser-131 each coordinate substrate. FMN contacts are provided by residues Gln-140–Ser-141 and Trp-185. Residue Arg-191 to His-193 participates in substrate binding. Position 195 (Arg-195) interacts with FMN.

Belongs to the pyridoxamine 5'-phosphate oxidase family. Homodimer. The cofactor is FMN.

The catalysed reaction is pyridoxamine 5'-phosphate + O2 + H2O = pyridoxal 5'-phosphate + H2O2 + NH4(+). It catalyses the reaction pyridoxine 5'-phosphate + O2 = pyridoxal 5'-phosphate + H2O2. The protein operates within cofactor metabolism; pyridoxal 5'-phosphate salvage; pyridoxal 5'-phosphate from pyridoxamine 5'-phosphate: step 1/1. It participates in cofactor metabolism; pyridoxal 5'-phosphate salvage; pyridoxal 5'-phosphate from pyridoxine 5'-phosphate: step 1/1. In terms of biological role, catalyzes the oxidation of either pyridoxine 5'-phosphate (PNP) or pyridoxamine 5'-phosphate (PMP) into pyridoxal 5'-phosphate (PLP). This is Pyridoxine/pyridoxamine 5'-phosphate oxidase from Dichelobacter nodosus (strain VCS1703A).